Reading from the N-terminus, the 265-residue chain is Cytochrome c oxidase subunit 3 (265 aa).

A run of 6 helical transmembrane segments spans residues 16–36 (PWPISGSLGALATTVGGVMYM), 41–61 (GGATLLSLGLIFLLYTMFVWW), 84–104 (YGSILFIVSEVMFLFAFFWAS), 162–182 (AVYALVATVSLALVSTGFQGM), 200–220 (FFLATGFHGFHVIIGTLFLIV), and 245–265 (WHFVDVVRLFPFVSIYWWGGI).

This sequence belongs to the cytochrome c oxidase subunit 3 family. In terms of assembly, component of the cytochrome c oxidase (complex IV, CIV), a multisubunit enzyme composed of a catalytic core of 3 subunits and several supernumerary subunits. The complex exists as a monomer or a dimer and forms supercomplexes (SCs) in the inner mitochondrial membrane with ubiquinol-cytochrome c oxidoreductase (cytochrome b-c1 complex, complex III, CIII).

Its subcellular location is the mitochondrion inner membrane. The catalysed reaction is 4 Fe(II)-[cytochrome c] + O2 + 8 H(+)(in) = 4 Fe(III)-[cytochrome c] + 2 H2O + 4 H(+)(out). Functionally, component of the cytochrome c oxidase, the last enzyme in the mitochondrial electron transport chain which drives oxidative phosphorylation. The respiratory chain contains 3 multisubunit complexes succinate dehydrogenase (complex II, CII), ubiquinol-cytochrome c oxidoreductase (cytochrome b-c1 complex, complex III, CIII) and cytochrome c oxidase (complex IV, CIV), that cooperate to transfer electrons derived from NADH and succinate to molecular oxygen, creating an electrochemical gradient over the inner membrane that drives transmembrane transport and the ATP synthase. Cytochrome c oxidase is the component of the respiratory chain that catalyzes the reduction of oxygen to water. Electrons originating from reduced cytochrome c in the intermembrane space (IMS) are transferred via the dinuclear copper A center (CU(A)) of subunit 2 and heme A of subunit 1 to the active site in subunit 1, a binuclear center (BNC) formed by heme A3 and copper B (CU(B)). The BNC reduces molecular oxygen to 2 water molecules using 4 electrons from cytochrome c in the IMS and 4 protons from the mitochondrial matrix. The chain is Cytochrome c oxidase subunit 3 (COX3) from Aegilops columnaris (Goatgrass).